We begin with the raw amino-acid sequence, 327 residues long: Putative D-threonate 4-phosphate dehydrogenase (327 aa).

2 residues coordinate substrate: histidine 139 and threonine 140. A divalent metal cation contacts are provided by histidine 169, histidine 213, and histidine 268. Lysine 276, asparagine 285, and arginine 294 together coordinate substrate.

The protein belongs to the PdxA family. PdxA2 subfamily. In terms of assembly, homodimer. A divalent metal cation serves as cofactor.

The enzyme catalyses 4-O-phospho-D-threonate + NAD(+) = dihydroxyacetone phosphate + CO2 + NADH. In terms of biological role, catalyzes the NAD-dependent oxidation and subsequent decarboxylation of D-threonate 4-phosphate to produce dihydroxyacetone phosphate (DHAP). This Salmonella typhi protein is Putative D-threonate 4-phosphate dehydrogenase.